The primary structure comprises 222 residues: Probable RNA 2'-phosphotransferase (222 aa).

It belongs to the KptA/TPT1 family.

Its function is as follows. Removes the 2'-phosphate from RNA via an intermediate in which the phosphate is ADP-ribosylated by NAD followed by a presumed transesterification to release the RNA and generate ADP-ribose 1''-2''-cyclic phosphate (APPR&gt;P). May function as an ADP-ribosylase. The polypeptide is Probable RNA 2'-phosphotransferase (Haloarcula marismortui (strain ATCC 43049 / DSM 3752 / JCM 8966 / VKM B-1809) (Halobacterium marismortui)).